Reading from the N-terminus, the 236-residue chain is Biosynthetic peptidoglycan transglycosylase (236 aa).

A helical transmembrane segment spans residues 12–31 (ALLWFAAGSVLVVLVLRWVP).

This sequence belongs to the glycosyltransferase 51 family.

Its subcellular location is the cell inner membrane. It carries out the reaction [GlcNAc-(1-&gt;4)-Mur2Ac(oyl-L-Ala-gamma-D-Glu-L-Lys-D-Ala-D-Ala)](n)-di-trans,octa-cis-undecaprenyl diphosphate + beta-D-GlcNAc-(1-&gt;4)-Mur2Ac(oyl-L-Ala-gamma-D-Glu-L-Lys-D-Ala-D-Ala)-di-trans,octa-cis-undecaprenyl diphosphate = [GlcNAc-(1-&gt;4)-Mur2Ac(oyl-L-Ala-gamma-D-Glu-L-Lys-D-Ala-D-Ala)](n+1)-di-trans,octa-cis-undecaprenyl diphosphate + di-trans,octa-cis-undecaprenyl diphosphate + H(+). It functions in the pathway cell wall biogenesis; peptidoglycan biosynthesis. Peptidoglycan polymerase that catalyzes glycan chain elongation from lipid-linked precursors. This Pseudomonas syringae pv. syringae (strain B728a) protein is Biosynthetic peptidoglycan transglycosylase.